The following is a 770-amino-acid chain: Integrin beta-2 (770 aa).

Residues 1-22 form the signal peptide; the sequence is MLPQRPQLLLLAGLLSLQSVLS. Glutamine 23 is modified (pyrrolidone carboxylic acid). The Extracellular portion of the chain corresponds to 23–701; the sequence is QECTKYKVST…DMLECVKGPN (679 aa). The region spanning 24–74 is the PSI domain; it reads ECTKYKVSTCRDCIESGPSCAWCQKLNFTGQGEPDSTRCDTRAQLLSKGCP. Cystine bridges form between cysteine 25–cysteine 43, cysteine 33–cysteine 447, cysteine 36–cysteine 62, cysteine 46–cysteine 73, cysteine 191–cysteine 198, cysteine 246–cysteine 286, cysteine 386–cysteine 400, cysteine 420–cysteine 445, cysteine 449–cysteine 467, cysteine 459–cysteine 470, cysteine 472–cysteine 481, cysteine 483–cysteine 514, cysteine 497–cysteine 512, cysteine 506–cysteine 517, cysteine 519–cysteine 534, cysteine 536–cysteine 559, cysteine 541–cysteine 557, cysteine 549–cysteine 562, cysteine 564–cysteine 573, cysteine 575–cysteine 598, cysteine 582–cysteine 596, cysteine 590–cysteine 601, cysteine 603–cysteine 612, cysteine 615–cysteine 618, cysteine 622–cysteine 663, cysteine 628–cysteine 647, cysteine 631–cysteine 643, and cysteine 671–cysteine 696. N-linked (GlcNAc...) asparagine glycosylation is found at asparagine 50 and asparagine 116. The 240-residue stretch at 124–363 folds into the VWFA domain; sequence GYPIDLYYLM…ELIKSAYNKL (240 aa). Positions 136 and 138 each coordinate Mg(2+). Ca(2+)-binding residues include serine 138, aspartate 141, aspartate 142, and aspartate 173. Residues asparagine 229, aspartate 231, proline 233, and glutamate 234 each contribute to the Ca(2+) site. Glutamate 234 contacts Mg(2+). The N-linked (GlcNAc...) asparagine glycan is linked to asparagine 254. Aspartate 264 and glutamate 347 together coordinate Ca(2+). Residues 397-399 carry the Cell attachment site motif; the sequence is RGD. 4 I-EGF domains span residues 449–482, 483–535, 536–574, and 575–613; these read CREA…KNCE, CQTH…QFCE, CDNV…SACQ, and CLKS…PLCI. N-linked (GlcNAc...) asparagine glycosylation is present at asparagine 501. An N-linked (GlcNAc...) asparagine glycan is attached at asparagine 642. The chain crosses the membrane as a helical span at residues 702–724; the sequence is IAAIVGGTVGGVVLVGILLLAIW. Over 725 to 770 the chain is Cytoplasmic; the sequence is KALTHLSDLREYHRFEKEKLKSQWNNDNPLFKSATTTVMNPKFAES. Phosphoserine is present on residues serine 746 and serine 757. A phosphothreonine mark is found at threonine 759 and threonine 761.

Belongs to the integrin beta chain family. Heterodimer of an alpha and a beta subunit. The ITGB2 beta subunit associates with the ITGAL, ITGAM, ITGAX or ITGAD alpha subunits. Found in a complex with CD177 and ITGAM/CD11b. Interacts with FGR. Interacts with COPS5 and RANBP9. Interacts with FLNA (via filamin repeats 4, 9, 12, 17, 19, 21, and 23). Interacts with THBD. Post-translationally, both Ser-746 and Ser-757 become phosphorylated when T-cells are exposed to phorbol esters. Phosphorylation on Thr-759 (but not on Ser-757) allows interaction with 14-3-3 proteins.

The protein localises to the cell membrane. Its subcellular location is the membrane raft. Integrin ITGAL/ITGB2 is a receptor for ICAM1, ICAM2, ICAM3 and ICAM4. Integrin ITGAL/ITGB2 is also a receptor for the secreted form of ubiquitin-like protein ISG15; the interaction is mediated by ITGAL. Integrins ITGAM/ITGB2 and ITGAX/ITGB2 are receptors for the iC3b fragment of the third complement component and for fibrinogen. Integrin ITGAX/ITGB2 recognizes the sequence G-P-R in fibrinogen alpha-chain. Integrin ITGAM/ITGB2 recognizes P1 and P2 peptides of fibrinogen gamma chain. Integrin ITGAM/ITGB2 is also a receptor for factor X. Integrin ITGAD/ITGB2 is a receptor for ICAM3 and VCAM1. Contributes to natural killer cell cytotoxicity. Involved in leukocyte adhesion and transmigration of leukocytes including T-cells and neutrophils. Triggers neutrophil transmigration during lung injury through PTK2B/PYK2-mediated activation. Integrin ITGAL/ITGB2 in association with ICAM3, contributes to apoptotic neutrophil phagocytosis by macrophages. In association with alpha subunit ITGAM/CD11b, required for CD177-PRTN3-mediated activation of TNF primed neutrophils. The protein is Integrin beta-2 (ITGB2) of Ovis canadensis (Bighorn sheep).